The chain runs to 108 residues: UPF0060 membrane protein Mfla_0485 (108 aa).

Helical transmembrane passes span 7 to 27 (FSLFILTALAEILGCYLPYLW), 33 to 53 (SVWLLLPAAISLAVFAWLLSL), 63 to 83 (AAYGGVYIFVALGWLWLVDGI), and 87 to 107 (TWDFVGVGVALAGMAIIMFAP).

This sequence belongs to the UPF0060 family.

Its subcellular location is the cell inner membrane. The polypeptide is UPF0060 membrane protein Mfla_0485 (Methylobacillus flagellatus (strain ATCC 51484 / DSM 6875 / VKM B-1610 / KT)).